Reading from the N-terminus, the 359-residue chain is Chorismate synthase (359 aa).

Arginine 47 contributes to the NADP(+) binding site. FMN is bound by residues 123–125 (RSS), glycine 283, 298–302 (KPTSS), and arginine 326.

This sequence belongs to the chorismate synthase family. In terms of assembly, homotetramer. It depends on FMNH2 as a cofactor.

The catalysed reaction is 5-O-(1-carboxyvinyl)-3-phosphoshikimate = chorismate + phosphate. The protein operates within metabolic intermediate biosynthesis; chorismate biosynthesis; chorismate from D-erythrose 4-phosphate and phosphoenolpyruvate: step 7/7. Functionally, catalyzes the anti-1,4-elimination of the C-3 phosphate and the C-6 proR hydrogen from 5-enolpyruvylshikimate-3-phosphate (EPSP) to yield chorismate, which is the branch point compound that serves as the starting substrate for the three terminal pathways of aromatic amino acid biosynthesis. This reaction introduces a second double bond into the aromatic ring system. In Chlamydia caviae (strain ATCC VR-813 / DSM 19441 / 03DC25 / GPIC) (Chlamydophila caviae), this protein is Chorismate synthase.